Here is a 212-residue protein sequence, read N- to C-terminus: Non-structural protein 5 (212 aa).

Asp-86 is a Mg(2+) binding site.

This sequence belongs to the rotavirus NSP5 family. Homodimer. Interacts with VP1. Interacts with VP2. Interacts with NSP2 and NSP6. Requires Mg(2+) as cofactor. In terms of processing, O-glycosylated.

The protein localises to the host cytoplasm. In terms of biological role, plays an essential role in the viral genome replication. Participates, together with NSP2, in the formation of viral factories (viroplasms) which are large inclusions in the host cytoplasm where replication intermediates are assembled and viral RNA replication takes place. Orchestrates the recruitment of viroplasmic proteins such as capsid proteins to these factories. This Homo sapiens (Human) protein is Non-structural protein 5.